We begin with the raw amino-acid sequence, 104 residues long: Flagellar hook-basal body complex protein FliE (104 aa).

The protein belongs to the FliE family.

It is found in the bacterial flagellum basal body. The chain is Flagellar hook-basal body complex protein FliE from Salmonella arizonae (strain ATCC BAA-731 / CDC346-86 / RSK2980).